Consider the following 207-residue polypeptide: Large ribosomal subunit protein uL4 (207 aa).

Residues 48–78 form a disordered region; that stretch reads THKVKTRSEVRGGGRKPWRQKGTGRARQGSI. The span at 60 to 71 shows a compositional bias: basic residues; sequence GGRKPWRQKGTG.

It belongs to the universal ribosomal protein uL4 family. As to quaternary structure, part of the 50S ribosomal subunit.

Its function is as follows. One of the primary rRNA binding proteins, this protein initially binds near the 5'-end of the 23S rRNA. It is important during the early stages of 50S assembly. It makes multiple contacts with different domains of the 23S rRNA in the assembled 50S subunit and ribosome. In terms of biological role, forms part of the polypeptide exit tunnel. This is Large ribosomal subunit protein uL4 from Bacillus pumilus (strain SAFR-032).